The chain runs to 426 residues: CAAX prenyl protease 1 homolog (426 aa).

At 1-3 (MVN) the chain is on the lumenal side. A helical membrane pass occupies residues 4 to 24 (YFIISISFFLLEHFYSFYLNF). Residues 25-70 (RQSKLLKNLTKVPEYCKDRITQEDFKKSQEYSKAKLDYKTLTSTIQ) lie on the Cytoplasmic side of the membrane. A helical transmembrane segment spans residues 71–91 (VLTTLLSFYYPVYPYFWNLSL). At 92-106 (ELAEKIGYPNEIIRS) the chain is on the lumenal side. Residues 107 to 127 (CFFFAFTVGVSVITEIPFSYY) form a helical membrane-spanning segment. Residues 128–150 (YQFILEEKFGYNRMTRTLFIKDK) lie on the Cytoplasmic side of the membrane. The chain crosses the membrane as a helical span at residues 151–171 (IISTLLMIGFGLPILSLAIFI). The Lumenal portion of the chain corresponds to 172–178 (INWSGPQ). A helical transmembrane segment spans residues 179-199 (LWFYCWLLLVAITLLSITIYP). Residues 200-294 (TFIQPLFNKF…GHYKMSHTLK (95 aa)) lie on the Cytoplasmic side of the membrane. H282 serves as a coordination point for Zn(2+). Residue E283 is part of the active site. H286 serves as a coordination point for Zn(2+). The chain crosses the membrane as a helical span at residues 295–315 (QMLLVQVHLVTLLYAFSLLIN). Over 316–333 (DDQLYQQFGFVSSKDSVL) the chain is Lumenal. Residues 334–354 (VGLTLFMFLYSPIDRIFSLLI) traverse the membrane as a helical segment. At 355–426 (NIFSRKYEFQ…KVALYKLKNK (72 aa)) the chain is on the cytoplasmic side. Zn(2+) is bound at residue E362.

The protein belongs to the peptidase M48B family. Zn(2+) serves as cofactor.

It localises to the endoplasmic reticulum membrane. The catalysed reaction is Hydrolyzes the peptide bond -P2-(S-farnesyl or geranylgeranyl)C-P1'-P2'-P3'-COOH where P1' and P2' are amino acids with aliphatic side chains and P3' is any C-terminal residue.. Proteolytically removes the C-terminal three residues of farnesylated proteins. The chain is CAAX prenyl protease 1 homolog (zmpste24) from Dictyostelium discoideum (Social amoeba).